Consider the following 502-residue polypeptide: MRIGFDHEKYLEEQSKYILERVNNYDKLYLEFGGKLLFDLHAKRVLPGFDENAKIKLLHKLKEKVEIIICLYAGDIERNKIRGDFGITYDVDVLRLIDDLRGYDLEVNSVVITRYSGQPATNIFINKLERRGIKVYKHEATKGYPTDVDTIVSDEGYGKNPYIETTKPIVVVTAPGPGSGKLATCLSQLYHEYKRGNVAGYSKFETFPVWNVPLKHPLNIAYESATVDLKDVNMIDSFHFDAYNKVAVNYNRDIESFPVLKRIIEKITGEESVYKSPTDMGVNRVGFGIVDDEIVKEASKQEIIRRAFKTACEYKKGYVDKETFHRAKLIMEEMNLKEEDRKVVIPAREYAAKLKERANKSETCTVVALELEDGTILTGRSSELMDGTAAVILNAVKHYANISDEIHLISPVILEPIINLKAKTLGSKRTALSCEEVLIALSICAATNPTAQVAMGKLPMLKGCQAHSTTILSTNEEQTFRKLGIDVTCDPEYISESLYYNN.

It belongs to the UPF0371 family.

This is UPF0371 protein CLM_0396 from Clostridium botulinum (strain Kyoto / Type A2).